Reading from the N-terminus, the 181-residue chain is Crossover junction endodeoxyribonuclease RuvC (181 aa).

Catalysis depends on residues aspartate 8, glutamate 67, and aspartate 139. Residues aspartate 8, glutamate 67, and aspartate 139 each contribute to the Mg(2+) site.

This sequence belongs to the RuvC family. In terms of assembly, homodimer which binds Holliday junction (HJ) DNA. The HJ becomes 2-fold symmetrical on binding to RuvC with unstacked arms; it has a different conformation from HJ DNA in complex with RuvA. In the full resolvosome a probable DNA-RuvA(4)-RuvB(12)-RuvC(2) complex forms which resolves the HJ. It depends on Mg(2+) as a cofactor.

The protein resides in the cytoplasm. The enzyme catalyses Endonucleolytic cleavage at a junction such as a reciprocal single-stranded crossover between two homologous DNA duplexes (Holliday junction).. Functionally, the RuvA-RuvB-RuvC complex processes Holliday junction (HJ) DNA during genetic recombination and DNA repair. Endonuclease that resolves HJ intermediates. Cleaves cruciform DNA by making single-stranded nicks across the HJ at symmetrical positions within the homologous arms, yielding a 5'-phosphate and a 3'-hydroxyl group; requires a central core of homology in the junction. The consensus cleavage sequence is 5'-(A/T)TT(C/G)-3'. Cleavage occurs on the 3'-side of the TT dinucleotide at the point of strand exchange. HJ branch migration catalyzed by RuvA-RuvB allows RuvC to scan DNA until it finds its consensus sequence, where it cleaves and resolves the cruciform DNA. This is Crossover junction endodeoxyribonuclease RuvC from Acinetobacter baylyi (strain ATCC 33305 / BD413 / ADP1).